The primary structure comprises 208 residues: Uracil phosphoribosyltransferase (208 aa).

5-phospho-alpha-D-ribose 1-diphosphate-binding positions include arginine 78, arginine 103, and 130–138; that span reads DPMLATGGS. Uracil contacts are provided by residues isoleucine 193 and 198–200; that span reads GDA. Aspartate 199 lines the 5-phospho-alpha-D-ribose 1-diphosphate pocket.

Belongs to the UPRTase family. The cofactor is Mg(2+).

It carries out the reaction UMP + diphosphate = 5-phospho-alpha-D-ribose 1-diphosphate + uracil. It participates in pyrimidine metabolism; UMP biosynthesis via salvage pathway; UMP from uracil: step 1/1. With respect to regulation, allosterically activated by GTP. Functionally, catalyzes the conversion of uracil and 5-phospho-alpha-D-ribose 1-diphosphate (PRPP) to UMP and diphosphate. The sequence is that of Uracil phosphoribosyltransferase from Klebsiella pneumoniae (strain 342).